The sequence spans 134 residues: Protein TraK (134 aa).

The interval 74-134 is disordered; the sequence is HIKAKPADVP…NPTPDKKDLL (61 aa). A compositionally biased stretch (low complexity) spans 83–92; the sequence is PAPQAKAAEP. Basic and acidic residues predominate over residues 99 to 112; sequence PEPRRPKQGGKAEK.

The sequence is that of Protein TraK (traK) from Escherichia coli.